The chain runs to 174 residues: Translationally-controlled tumor protein homolog 1 (174 aa).

Residues Met1–Tyr174 form the TCTP domain.

This sequence belongs to the TCTP family.

The protein localises to the cytoplasm. Involved in calcium binding and microtubule stabilization. This chain is Translationally-controlled tumor protein homolog 1, found in Dictyostelium discoideum (Social amoeba).